The sequence spans 142 residues: 3-hydroxyacyl-[acyl-carrier-protein] dehydratase FabZ (142 aa).

His-50 is an active-site residue.

It belongs to the thioester dehydratase family. FabZ subfamily.

It is found in the cytoplasm. The enzyme catalyses a (3R)-hydroxyacyl-[ACP] = a (2E)-enoyl-[ACP] + H2O. Its function is as follows. Involved in unsaturated fatty acids biosynthesis. Catalyzes the dehydration of short chain beta-hydroxyacyl-ACPs and long chain saturated and unsaturated beta-hydroxyacyl-ACPs. The chain is 3-hydroxyacyl-[acyl-carrier-protein] dehydratase FabZ from Clostridium tetani (strain Massachusetts / E88).